Consider the following 270-residue polypeptide: 2-heptyl-3-hydroxy-4-quinolone dioxygenase AqdC2 (270 aa).

An AB hydrolase-1 domain is found at 25-156 (PALVLLTGWG…KSARAGLAKS (132 aa)). Histidine 99 contributes to the substrate binding site. Histidine 248 functions as the Proton donor/acceptor in the catalytic mechanism.

The protein belongs to the AB hydrolase superfamily.

The catalysed reaction is 2-heptyl-3-hydroxy-4(1H)-quinolone + O2 = N-octanoylanthranilate + CO + H(+). Its function is as follows. Involved in the degradation of the Pseudomonas aeruginosa quorum sensing signal molecules HHQ (2-heptyl-4-quinolone) and PQS (2-heptyl-3-hydroxy-4-quinolone) to anthranilic acid. Catalyzes the cleavage of PQS to form N-octanoylanthranilic acid and carbon monoxide. The sequence is that of 2-heptyl-3-hydroxy-4-quinolone dioxygenase AqdC2 from Rhodococcus erythropolis (Arthrobacter picolinophilus).